Here is a 353-residue protein sequence, read N- to C-terminus: Protein CEPU-1 (353 aa).

An N-terminal signal peptide occupies residues 1 to 28 (MAQAKMQHPVSWVIFAGMAALLLFQGVP). 3 consecutive Ig-like C2-type domains span residues 37 to 124 (PKAM…PKTS), 134 to 216 (PKIT…VKVT), and 220 to 314 (PPYI…ETTT). N-linked (GlcNAc...) asparagine glycosylation is found at Asn-42, Asn-68, and Asn-150. A disulfide bridge connects residues Cys-55 and Cys-113. Disulfide bonds link Cys-155-Cys-199 and Cys-241-Cys-293. N-linked (GlcNAc...) asparagine glycosylation is found at Asn-282, Asn-290, and Asn-303. A lipid anchor (GPI-anchor amidated serine) is attached at Ser-330. The propeptide at 331 to 353 (GAWRRGSCAWLLALPLAQLARQF) is removed in mature form.

It belongs to the immunoglobulin superfamily. IgLON family. As to quaternary structure, interacts with NEGR1. In terms of tissue distribution, found on the dendrites, somata and axons of developing Purkinje cells. Undetectable on other neurons like Golgi or granule cells.

The protein resides in the cell membrane. In terms of biological role, it may be a cellular address molecule specific to Purkinje cells. It may represent a receptor or a subunit of a receptor complex. The sequence is that of Protein CEPU-1 from Gallus gallus (Chicken).